The primary structure comprises 121 residues: Holin-like protein CidA (121 aa).

4 helical membrane passes run 3–23 (WWKL…GEWI), 30–50 (PVPG…FNLV), 58–78 (GADF…VAVI), and 89–109 (IDLI…TGLL).

This sequence belongs to the CidA/LrgA family. CidA subfamily.

It is found in the cell membrane. Functionally, increases the activity of extracellular murein hydrolases possibly by mediating their export via hole formation. Inhibited by the antiholin-like proteins LrgAB. In an unstressed cell, the LrgAB products probably inhibit the function of the CidA protein. When a cell is stressed by the addition of antibiotics or by other factors in the environment, CidA possibly oligomerizes within the bacterial cell membrane, creating lesions that disrupt the proton motive force, which in turn results in loss of cell viability. These lesions are also hypothesized to regulate the subsequent cell lysis by either allowing the murein hydrolases access to the cell wall substrate and/or regulating their activity by a possible change in the cell wall pH that results from loss of membrane potential. This chain is Holin-like protein CidA, found in Bacillus cereus (strain ATCC 10987 / NRS 248).